The primary structure comprises 464 residues: Protein ABHD18 (464 aa).

Positions 1-24 are cleaved as a signal peptide; sequence MGVSKLDILYRRLLLTKLFIRGWG. Asn-341 is a glycosylation site (N-linked (GlcNAc...) asparagine).

It belongs to the AB hydrolase superfamily.

Its subcellular location is the secreted. In Mus musculus (Mouse), this protein is Protein ABHD18.